Reading from the N-terminus, the 294-residue chain is Deubiquitinase OTUD6B (294 aa).

At Met1 the chain carries N-acetylmethionine. An OTU domain is found at 148-285; the sequence is LEIKQIPSDG…GEHYNSVTRL (138 aa). The tract at residues 153–159 is cys-loop; that stretch reads IPSDGHC. Asp156 is an active-site residue. The Nucleophile role is filled by Cys159. The interval 220–230 is variable-loop; the sequence is IVNTAAWGGQL. The tract at residues 268–278 is his-loop; it reads YMRHAYGLGEH. The active site involves His278.

Interacts with the eukaryotic translation initiation factor 4F complex. Ubiquitously expressed. Expression is observed in several organ systems including the cardiovascular, digestive, central and peripheral nervous and musculoskeletal systems.

It carries out the reaction Thiol-dependent hydrolysis of ester, thioester, amide, peptide and isopeptide bonds formed by the C-terminal Gly of ubiquitin (a 76-residue protein attached to proteins as an intracellular targeting signal).. In terms of biological role, deubiquitinating enzyme that may play a role in the ubiquitin-dependent regulation of protein synthesis, downstream of mTORC1. May associate with the protein synthesis initiation complex and modify its ubiquitination to repress translation. May also repress DNA synthesis and modify different cellular targets thereby regulating cell growth and proliferation. May also play a role in proteasome assembly and function. The protein is Deubiquitinase OTUD6B of Mus musculus (Mouse).